Consider the following 370-residue polypeptide: Calcium/calmodulin-dependent protein kinase type 1 (370 aa).

A Protein kinase domain is found at 20-276 (YDFRDVLGTG…CEQALQHPWI (257 aa)). ATP is bound by residues 26 to 34 (LGTGAFSEV) and Lys49. A Glycyl lysine isopeptide (Lys-Gly) (interchain with G-Cter in ubiquitin) cross-link involves residue Lys59. Asp141 serves as the catalytic Proton acceptor. Thr177 bears the Phosphothreonine; by CaMKK1 and CaMKK2 mark. An autoinhibitory domain region spans residues 276–316 (IAGDTALDKNIHQSVSEQIKKNFAKSKWKQAFNATAVVRHM). The interval 296-317 (KNFAKSKWKQAFNATAVVRHMR) is calmodulin-binding. The Nuclear export signal signature appears at 315 to 321 (HMRKLQL). At Ser363 the chain carries Phosphoserine.

The protein belongs to the protein kinase superfamily. CAMK Ser/Thr protein kinase family. CaMK subfamily. In terms of assembly, monomer. Interacts with XPO1. Interacts with MARK2, ARHGEF7/BETAPIX and GIT1. Post-translationally, phosphorylated by CaMKK1 and CaMKK2 on Thr-177. Polybiquitinated by the E3 ubiquitin-protein ligase complex SCF(FBXL12), leading to proteasomal degradation. Widely expressed. Expressed in cells of the zona glomerulosa of the adrenal cortex.

It is found in the cytoplasm. It localises to the nucleus. It carries out the reaction L-seryl-[protein] + ATP = O-phospho-L-seryl-[protein] + ADP + H(+). It catalyses the reaction L-threonyl-[protein] + ATP = O-phospho-L-threonyl-[protein] + ADP + H(+). Its activity is regulated as follows. Activated by Ca(2+)/calmodulin. Binding of calmodulin results in conformational change that relieves intrasteric autoinhibition and allows phosphorylation of Thr-177 within the activation loop by CaMKK1 or CaMKK2. Phosphorylation of Thr-177 results in several fold increase in total activity. Unlike CaMK4, is unable to exhibit autonomous activity after Ca(2+)/calmodulin activation. In terms of biological role, calcium/calmodulin-dependent protein kinase that operates in the calcium-triggered CaMKK-CaMK1 signaling cascade and, upon calcium influx, regulates transcription activators activity, cell cycle, hormone production, cell differentiation, actin filament organization and neurite outgrowth. Recognizes the substrate consensus sequence [MVLIF]-x-R-x(2)-[ST]-x(3)-[MVLIF]. Regulates axonal extension and growth cone motility in hippocampal and cerebellar nerve cells. Upon NMDA receptor-mediated Ca(2+) elevation, promotes dendritic growth in hippocampal neurons and is essential in synapses for full long-term potentiation (LTP) and ERK2-dependent translational activation. Downstream of NMDA receptors, promotes the formation of spines and synapses in hippocampal neurons by phosphorylating ARHGEF7/BETAPIX on 'Ser-694', which results in the enhancement of ARHGEF7 activity and activation of RAC1. Promotes neuronal differentiation and neurite outgrowth by activation and phosphorylation of MARK2 on 'Ser-91', 'Ser-92', 'Ser-93' and 'Ser-294'. Promotes nuclear export of HDAC5 and binding to 14-3-3 by phosphorylation of 'Ser-259' and 'Ser-498' in the regulation of muscle cell differentiation. Regulates NUMB-mediated endocytosis by phosphorylation of NUMB on 'Ser-276' and 'Ser-295'. Involved in the regulation of basal and estrogen-stimulated migration of medulloblastoma cells through ARHGEF7/BETAPIX phosphorylation. Is required for proper activation of cyclin-D1/CDK4 complex during G1 progression in diploid fibroblasts. Plays a role in K(+) and ANG2-mediated regulation of the aldosterone synthase (CYP11B2) to produce aldosterone in the adrenal cortex. Phosphorylates EIF4G3/eIF4GII. In vitro phosphorylates CREB1, ATF1, CFTR, MYL9 and SYN1/synapsin I. The protein is Calcium/calmodulin-dependent protein kinase type 1 (CAMK1) of Homo sapiens (Human).